The primary structure comprises 294 residues: 4-hydroxy-tetrahydrodipicolinate synthase (294 aa).

Residue threonine 44 participates in pyruvate binding. Tyrosine 132 (proton donor/acceptor) is an active-site residue. The active-site Schiff-base intermediate with substrate is the lysine 160. Valine 202 is a binding site for pyruvate.

Belongs to the DapA family. In terms of assembly, homotetramer; dimer of dimers.

The protein resides in the cytoplasm. The enzyme catalyses L-aspartate 4-semialdehyde + pyruvate = (2S,4S)-4-hydroxy-2,3,4,5-tetrahydrodipicolinate + H2O + H(+). It participates in amino-acid biosynthesis; L-lysine biosynthesis via DAP pathway; (S)-tetrahydrodipicolinate from L-aspartate: step 3/4. Catalyzes the condensation of (S)-aspartate-beta-semialdehyde [(S)-ASA] and pyruvate to 4-hydroxy-tetrahydrodipicolinate (HTPA). The protein is 4-hydroxy-tetrahydrodipicolinate synthase of Leptospira biflexa serovar Patoc (strain Patoc 1 / Ames).